The sequence spans 150 residues: D-aminoacyl-tRNA deacylase (150 aa).

The short motif at 133–134 (GP) is the Gly-cisPro motif, important for rejection of L-amino acids element.

This sequence belongs to the DTD family. Homodimer.

The protein localises to the cytoplasm. The catalysed reaction is glycyl-tRNA(Ala) + H2O = tRNA(Ala) + glycine + H(+). It carries out the reaction a D-aminoacyl-tRNA + H2O = a tRNA + a D-alpha-amino acid + H(+). An aminoacyl-tRNA editing enzyme that deacylates mischarged D-aminoacyl-tRNAs. Also deacylates mischarged glycyl-tRNA(Ala), protecting cells against glycine mischarging by AlaRS. Acts via tRNA-based rather than protein-based catalysis; rejects L-amino acids rather than detecting D-amino acids in the active site. By recycling D-aminoacyl-tRNA to D-amino acids and free tRNA molecules, this enzyme counteracts the toxicity associated with the formation of D-aminoacyl-tRNA entities in vivo and helps enforce protein L-homochirality. This is D-aminoacyl-tRNA deacylase from Kocuria rhizophila (strain ATCC 9341 / DSM 348 / NBRC 103217 / DC2201).